We begin with the raw amino-acid sequence, 386 residues long: Oxysterol-binding protein-related protein 4A (386 aa).

It belongs to the OSBP family. As to expression, expressed in roots, stems and flowers.

In terms of biological role, may be involved in the transport of sterols. The polypeptide is Oxysterol-binding protein-related protein 4A (ORP4A) (Arabidopsis thaliana (Mouse-ear cress)).